Reading from the N-terminus, the 185-residue chain is Intraflagellar transport protein 22 homolog (185 aa).

GTP is bound by residues 10 to 17, 63 to 67, and 123 to 126; these read GPCESGKT, DCGGD, and HKPG. S137 carries the phosphoserine modification.

This sequence belongs to the small GTPase superfamily. Rab family. As to quaternary structure, component of the IFT complex B, at least composed of IFT20, IFT22, IFT25, IFT27, IFT46, IFT52, TRAF3IP1/IFT54, IFT57, IFT74, IFT80, IFT81, and IFT88. Interacts with IFT88. Interacts with CFAP61.

It localises to the cell projection. It is found in the cilium. Functionally, small GTPase-like component of the intraflagellar transport (IFT) complex B. The sequence is that of Intraflagellar transport protein 22 homolog (IFT22) from Homo sapiens (Human).